Reading from the N-terminus, the 648-residue chain is Macrolide export ATP-binding/permease protein MacB (648 aa).

One can recognise an ABC transporter domain in the interval 5–243 (LELCNVSRSY…QGVDAAVVNT (239 aa)). 41-48 (GVSGSGKS) serves as a coordination point for ATP. The next 5 helical transmembrane spans lie at 273–293 (LLTM…VVVG), 417–437 (ANVV…IGVA), 523–543 (LFLT…VMNI), 578–598 (LVCL…AFML), and 611–631 (LTAL…FGWL).

It belongs to the ABC transporter superfamily. Macrolide exporter (TC 3.A.1.122) family. In terms of assembly, homodimer. Part of the tripartite efflux system MacAB-TolC, which is composed of an inner membrane transporter, MacB, a periplasmic membrane fusion protein, MacA, and an outer membrane component, TolC. The complex forms a large protein conduit and can translocate molecules across both the inner and outer membranes. Interacts with MacA.

The protein resides in the cell inner membrane. Part of the tripartite efflux system MacAB-TolC. MacB is a non-canonical ABC transporter that contains transmembrane domains (TMD), which form a pore in the inner membrane, and an ATP-binding domain (NBD), which is responsible for energy generation. Confers resistance against macrolides. This chain is Macrolide export ATP-binding/permease protein MacB, found in Salmonella paratyphi A (strain ATCC 9150 / SARB42).